The following is an 84-amino-acid chain: ATP synthase subunit c (84 aa).

The next 2 membrane-spanning stretches (helical) occupy residues 9–29 (IIAS…GFAI) and 54–74 (IVAG…LLFI).

The protein belongs to the ATPase C chain family. In terms of assembly, F-type ATPases have 2 components, F(1) - the catalytic core - and F(0) - the membrane proton channel. F(1) has five subunits: alpha(3), beta(3), gamma(1), delta(1), epsilon(1). F(0) has three main subunits: a(1), b(2) and c(10-14). The alpha and beta chains form an alternating ring which encloses part of the gamma chain. F(1) is attached to F(0) by a central stalk formed by the gamma and epsilon chains, while a peripheral stalk is formed by the delta and b chains.

It localises to the cell inner membrane. Functionally, f(1)F(0) ATP synthase produces ATP from ADP in the presence of a proton or sodium gradient. F-type ATPases consist of two structural domains, F(1) containing the extramembraneous catalytic core and F(0) containing the membrane proton channel, linked together by a central stalk and a peripheral stalk. During catalysis, ATP synthesis in the catalytic domain of F(1) is coupled via a rotary mechanism of the central stalk subunits to proton translocation. Key component of the F(0) channel; it plays a direct role in translocation across the membrane. A homomeric c-ring of between 10-14 subunits forms the central stalk rotor element with the F(1) delta and epsilon subunits. This chain is ATP synthase subunit c, found in Pasteurella multocida (strain Pm70).